We begin with the raw amino-acid sequence, 485 residues long: Ribulose bisphosphate carboxylase large chain (485 aa).

Residues 1–2 constitute a propeptide that is removed on maturation; the sequence is MS. Pro-3 bears the N-acetylproline mark. At Lys-14 the chain carries N6,N6,N6-trimethyllysine. 2 residues coordinate substrate: Asn-123 and Thr-173. Lys-175 serves as the catalytic Proton acceptor. Lys-177 is a substrate binding site. Residues Lys-201, Asp-203, and Glu-204 each contribute to the Mg(2+) site. Residue Lys-201 is modified to N6-carboxylysine. Residue His-294 is the Proton acceptor of the active site. Residues Arg-295, His-327, and Ser-379 each coordinate substrate.

It belongs to the RuBisCO large chain family. Type I subfamily. Heterohexadecamer of 8 large chains and 8 small chains; disulfide-linked. The disulfide link is formed within the large subunit homodimers. The cofactor is Mg(2+). In terms of processing, the disulfide bond which can form in the large chain dimeric partners within the hexadecamer appears to be associated with oxidative stress and protein turnover.

It localises to the plastid. The protein localises to the chloroplast. It catalyses the reaction 2 (2R)-3-phosphoglycerate + 2 H(+) = D-ribulose 1,5-bisphosphate + CO2 + H2O. The enzyme catalyses D-ribulose 1,5-bisphosphate + O2 = 2-phosphoglycolate + (2R)-3-phosphoglycerate + 2 H(+). In terms of biological role, ruBisCO catalyzes two reactions: the carboxylation of D-ribulose 1,5-bisphosphate, the primary event in carbon dioxide fixation, as well as the oxidative fragmentation of the pentose substrate in the photorespiration process. Both reactions occur simultaneously and in competition at the same active site. The sequence is that of Ribulose bisphosphate carboxylase large chain from Helianthus annuus (Common sunflower).